Here is a 393-residue protein sequence, read N- to C-terminus: NAD(P)H-quinone oxidoreductase subunit H, chloroplastic (393 aa).

Belongs to the complex I 49 kDa subunit family. As to quaternary structure, NDH is composed of at least 16 different subunits, 5 of which are encoded in the nucleus.

Its subcellular location is the plastid. The protein localises to the chloroplast thylakoid membrane. The catalysed reaction is a plastoquinone + NADH + (n+1) H(+)(in) = a plastoquinol + NAD(+) + n H(+)(out). It carries out the reaction a plastoquinone + NADPH + (n+1) H(+)(in) = a plastoquinol + NADP(+) + n H(+)(out). Functionally, NDH shuttles electrons from NAD(P)H:plastoquinone, via FMN and iron-sulfur (Fe-S) centers, to quinones in the photosynthetic chain and possibly in a chloroplast respiratory chain. The immediate electron acceptor for the enzyme in this species is believed to be plastoquinone. Couples the redox reaction to proton translocation, and thus conserves the redox energy in a proton gradient. This Lolium perenne (Perennial ryegrass) protein is NAD(P)H-quinone oxidoreductase subunit H, chloroplastic.